We begin with the raw amino-acid sequence, 702 residues long: Acetylcholinesterase (702 aa).

The first 36 residues, 1–36, serve as a signal peptide directing secretion; the sequence is MEIRGLITRLLGPCHLRHLILCSLGLYSILVQSVHC. The interval 107–134 is disordered; it reads HIHSTTTRRRGLTRRESSSDATDSDPLV. An N-linked (GlcNAc...) asparagine glycan is attached at Asn187. Cysteines 195 and 222 form a disulfide. Ser327 serves as the catalytic Acyl-ester intermediate. The cysteines at positions 381 and 394 are disulfide-linked. Active-site charge relay system residues include Glu453 and His567. Cys529 and Cys650 are oxidised to a cystine. A glycan (N-linked (GlcNAc...) asparagine) is linked at Asn637.

This sequence belongs to the type-B carboxylesterase/lipase family.

The protein localises to the synapse. Its subcellular location is the secreted. The protein resides in the cell membrane. It catalyses the reaction acetylcholine + H2O = choline + acetate + H(+). Rapidly hydrolyzes choline released into the synapse. This Culex pipiens (House mosquito) protein is Acetylcholinesterase (ACHE1).